The sequence spans 197 residues: dTTP/UTP pyrophosphatase (197 aa).

D70 (proton acceptor) is an active-site residue.

Belongs to the Maf family. YhdE subfamily. A divalent metal cation serves as cofactor.

Its subcellular location is the cytoplasm. The catalysed reaction is dTTP + H2O = dTMP + diphosphate + H(+). The enzyme catalyses UTP + H2O = UMP + diphosphate + H(+). Nucleoside triphosphate pyrophosphatase that hydrolyzes dTTP and UTP. May have a dual role in cell division arrest and in preventing the incorporation of modified nucleotides into cellular nucleic acids. This chain is dTTP/UTP pyrophosphatase (yceF), found in Shigella dysenteriae serotype 1 (strain Sd197).